Consider the following 177-residue polypeptide: DELTA-stichotoxin-Hmg2b (177 aa).

A plays an important role in the hemolytic activity region spans residues Ala-3–Ala-12. An N-terminal region region spans residues Gly-11 to Ser-30. Positions 54, 87, 105, 107, 133, 137, and 138 each coordinate phosphocholine.

This sequence belongs to the actinoporin family. Sea anemone subfamily. Octamer or nonamer in membranes. Monomer in the soluble state.

It is found in the secreted. It localises to the nematocyst. Its subcellular location is the target cell membrane. Its function is as follows. Pore-forming protein that forms cations-selective hydrophilic pores of around 1 nm and causes cytolysis. Pore formation is a multi-step process that involves specific recognition of membrane sphingomyelin (but neither cholesterol nor phosphatidylcholine) using aromatic rich region and adjacent phosphocholine (POC) binding site, firm binding to the membrane (mainly driven by hydrophobic interactions) accompanied by the transfer of the N-terminal region to the lipid-water interface and finally pore formation after oligomerization of monomers This toxin shows hemolytic activity. In Heteractis magnifica (Magnificent sea anemone), this protein is DELTA-stichotoxin-Hmg2b.